The sequence spans 527 residues: MSLNPHQIFNESGIQERGENARLSSFVGAIAVGDLVKSTLGPKGMDKILQSNSSGDIVVTNDGATILKSIALDNAAAKVLVNISKVQDDEVGDGTTSVCVFAAELLRQAEIMVNAKIHPQVIIDGYRIATKTAIDALRASSIDNSSDPAKFRSDLENIARTTLSSKILSQNKNHFAQLAVDAVLRLKGSTNLDNIQIIKILGGKLDDSFLDEGFILNKTIGVNCPKVMENANILIANTAMDTDKVKVFGARVRVDTTGKLAELERAEREKMKAKVEKIKSHNINCFINRQLIYNWPEQLFADAGIMSIEHADFDGIERLSLVTGGEIASTFDHPELVKLGHCKKIEEIIIGEDKMIKFSGVEAGEACTIVLRGATHQLLDESERAIHDALAVLSQTVAESRVTLGGGCAEMLMAKAVEEAATHEPGKKAVAVSAFAKALSQLPTILADNAGFDSSELVAQLKAAHYDGNDTMGLDMDEGEIADMRAKGILEALKLKQAVVSSGSEGAQLLLRVDTILKAAPRPRERM.

The protein belongs to the TCP-1 chaperonin family. As to quaternary structure, heterooligomeric complex of about 850 to 900 kDa that forms two stacked rings, 12 to 16 nm in diameter.

It is found in the cytoplasm. In terms of biological role, molecular chaperone; assists the folding of proteins upon ATP hydrolysis. Known to play a role, in vitro, in the folding of actin and tubulin. This Schizosaccharomyces pombe (strain 972 / ATCC 24843) (Fission yeast) protein is Probable T-complex protein 1 subunit beta (cct2).